The sequence spans 382 residues: MAKRDYYEVLGVSRTASADELKKAYRTKAKELHPDRNADNPQAEAQFKEVNEAYDVLRDADKKAAYDRYGHAAFEGGMGGGARAGGGYGQQGDFASAFSDVFEDLFGDFMGGRGGAPRSRAQRGSDLRYNLRVTLDEAYRGVQKTINVPASVACDACKGTGAEGGAEAVTCPTCSGMGKVRAQQGFFTVERTCPTCNGMGQIVKNPCKVCHGAGRVEKERSLSVNIPAGVETGTRIRLAGEGEAGMRGGPSGDLYIFIEVREHALFQRDGVHLFCRVPVSIAAAALGGEVEVPTIDGGSSRVKIPAGSQTGKQMRLRGKGMPALRGGGAGDMLIELAVETPVNLTARQKELLREFEKLSEDNNPEGKSFFSKVKGFWDGMTG.

The region spanning 5 to 70 (DYYEVLGVSR…DKKAAYDRYG (66 aa)) is the J domain. The CR-type zinc finger occupies 141–219 (GVQKTINVPA…CHGAGRVEKE (79 aa)). Positions 154, 157, 171, 174, 193, 196, 207, and 210 each coordinate Zn(2+). 4 CXXCXGXG motif repeats span residues 154–161 (CDACKGTG), 171–178 (CPTCSGMG), 193–200 (CPTCNGMG), and 207–214 (CKVCHGAG).

This sequence belongs to the DnaJ family. As to quaternary structure, homodimer. It depends on Zn(2+) as a cofactor.

The protein localises to the cytoplasm. Its function is as follows. Participates actively in the response to hyperosmotic and heat shock by preventing the aggregation of stress-denatured proteins and by disaggregating proteins, also in an autonomous, DnaK-independent fashion. Unfolded proteins bind initially to DnaJ; upon interaction with the DnaJ-bound protein, DnaK hydrolyzes its bound ATP, resulting in the formation of a stable complex. GrpE releases ADP from DnaK; ATP binding to DnaK triggers the release of the substrate protein, thus completing the reaction cycle. Several rounds of ATP-dependent interactions between DnaJ, DnaK and GrpE are required for fully efficient folding. Also involved, together with DnaK and GrpE, in the DNA replication of plasmids through activation of initiation proteins. The sequence is that of Chaperone protein DnaJ from Cereibacter sphaeroides (strain ATCC 17023 / DSM 158 / JCM 6121 / CCUG 31486 / LMG 2827 / NBRC 12203 / NCIMB 8253 / ATH 2.4.1.) (Rhodobacter sphaeroides).